The sequence spans 258 residues: Short-chain dehydrogenase/reductase olcF (258 aa).

NADP(+)-binding residues include Val12, Asp58, and Arg120. Catalysis depends on Ser138, which acts as the Proton donor. NADP(+)-binding residues include Tyr152, Lys156, and Val185. Tyr152 (proton acceptor) is an active-site residue. Lys156 (lowers pKa of active site Tyr) is an active-site residue.

This sequence belongs to the short-chain dehydrogenases/reductases (SDR) family.

It functions in the pathway secondary metabolite biosynthesis; terpenoid biosynthesis. Its function is as follows. Short-chain dehydrogenase/reductase; part of the gene cluster that mediates the biosynthesis of 15-deoxyoxalicine B. The first step of the pathway is the synthesis of nicotinyl-CoA from nicotinic acid by the nicotinic acid-CoA ligase olcI. Nicotinyl-CoA is then a substrate of polyketide synthase olcA to produce 4-hydroxy-6-(3-pyridinyl)-2H-pyran-2-one (HPPO) which is further prenylated by the polyprenyl transferase olcH to yield geranylgeranyl-HPPO. Geranylgeranyl pyrophosphate is provided by the cluster-specific geranylgeranyl pyrophosphate synthase olcC. The FAD-dependent monooxygenase olcE catalyzes the epoxidation of geranylgeranyl-HPPO and the terpene cyclase olcD catalyzes the cyclization of the terpenoid component, resulting in the formation of the tricyclic terpene moiety seen in predecaturin E. The cytochrome P450 monooxygenase then catalyzes the allylic oxidation of predecaturin E, which is followed by spirocylization with concomitant loss of one molecule of water to form decaturin E. Decaturin E is the substrate of the cytochrome P450 monooxygenase olcJ which hydroxylates it at the C-29 position to form decaturin F. The short-chain dehydrogenase/reductase olcF may catalyze the oxidation of decaturin F to generate the 29-hydroxyl-27-one intermediate, and subsequent hemiacetal formation probably leads to the formation of decaturin C. The dioxygenase olcK may be a peroxisomal enzyme that catalyzes the hydroxylation of decaturin C into decaturin A once decaturin C is shuttled into the peroxisome by the MFS transporter olcL. Finally the cytochrome P450 monooxygenase olcB catalyzes the oxidative rearrangement to yield 15-deoxyoxalicine B. In the absence of olcJ, decaturin E may be shunted to a pathway in which it is oxidized to a ketone, possibly by olcF, to form decaturin D, which undergoes further allylic oxidation to yield decaturin G. Moreover, in the absence of oclK or oclL, oclB can convert decaturin C into 15-deoxyoxalicine A. The chain is Short-chain dehydrogenase/reductase olcF from Penicillium canescens.